A 596-amino-acid chain; its full sequence is 3-hydroxy-3-methylglutaryl-coenzyme A reductase 1 (596 aa).

Residues 1–29 (MDVRRRPVKPLYTSKDASAGEPLKQQEVS) form a disordered region. The next 2 membrane-spanning stretches (helical) occupy residues 41 to 61 (LYLT…FLLV) and 83 to 103 (AMVS…IGFV). The interval 104–183 (QSFVSRSNSD…SPIIMPALSE (80 aa)) is linker. The interval 184–596 (DDEEIIQSVV…YNRSIKDISK (413 aa)) is catalytic. The active-site Charge relay system is E278. N-linked (GlcNAc...) asparagine glycosylation occurs at N342. The active-site Charge relay system is the K410. N455 is a glycosylation site (N-linked (GlcNAc...) asparagine). D486 serves as the catalytic Charge relay system. Catalysis depends on H584, which acts as the Proton donor. N588 carries N-linked (GlcNAc...) asparagine glycosylation.

The protein belongs to the HMG-CoA reductase family. In terms of tissue distribution, expressed in flower primordia and anthers.

The protein resides in the endoplasmic reticulum membrane. It catalyses the reaction (R)-mevalonate + 2 NADP(+) + CoA = (3S)-3-hydroxy-3-methylglutaryl-CoA + 2 NADPH + 2 H(+). Its pathway is metabolic intermediate biosynthesis; (R)-mevalonate biosynthesis; (R)-mevalonate from acetyl-CoA: step 3/3. Functionally, catalyzes the synthesis of mevalonate. The specific precursor of all isoprenoid compounds present in plants. The protein is 3-hydroxy-3-methylglutaryl-coenzyme A reductase 1 (HMG1) of Solanum tuberosum (Potato).